Here is a 411-residue protein sequence, read N- to C-terminus: Branched-chain-amino-acid aminotransferase, cytosolic (411 aa).

An N6-(pyridoxal phosphate)lysine modification is found at lysine 247.

Belongs to the class-IV pyridoxal-phosphate-dependent aminotransferase family. As to quaternary structure, homodimer. The cofactor is pyridoxal 5'-phosphate. Post-translationally, the N-terminus is blocked. Brain, low expression in ovary and placenta, but not found in liver, kidney, and skeletal muscle.

It localises to the cytoplasm. The catalysed reaction is L-leucine + 2-oxoglutarate = 4-methyl-2-oxopentanoate + L-glutamate. It catalyses the reaction L-isoleucine + 2-oxoglutarate = (S)-3-methyl-2-oxopentanoate + L-glutamate. The enzyme catalyses L-valine + 2-oxoglutarate = 3-methyl-2-oxobutanoate + L-glutamate. Catalyzes the first reaction in the catabolism of the essential branched chain amino acids leucine, isoleucine, and valine. In Rattus norvegicus (Rat), this protein is Branched-chain-amino-acid aminotransferase, cytosolic (Bcat1).